The sequence spans 67 residues: Large ribosomal subunit protein bL35 (67 aa).

The protein belongs to the bacterial ribosomal protein bL35 family.

The chain is Large ribosomal subunit protein bL35 from Zymomonas mobilis subsp. mobilis (strain ATCC 31821 / ZM4 / CP4).